The chain runs to 366 residues: Ribosomal RNA large subunit methyltransferase M (366 aa).

Residues Ser-188, Cys-221–Gly-224, Asp-240, Asp-260, and Asp-277 each bind S-adenosyl-L-methionine. Lys-306 serves as the catalytic Proton acceptor.

This sequence belongs to the class I-like SAM-binding methyltransferase superfamily. RNA methyltransferase RlmE family. RlmM subfamily. Monomer.

The protein localises to the cytoplasm. It carries out the reaction cytidine(2498) in 23S rRNA + S-adenosyl-L-methionine = 2'-O-methylcytidine(2498) in 23S rRNA + S-adenosyl-L-homocysteine + H(+). Its function is as follows. Catalyzes the 2'-O-methylation at nucleotide C2498 in 23S rRNA. This chain is Ribosomal RNA large subunit methyltransferase M, found in Escherichia coli O139:H28 (strain E24377A / ETEC).